A 294-amino-acid chain; its full sequence is Elongation factor Ts (294 aa).

An involved in Mg(2+) ion dislocation from EF-Tu region spans residues 82–85 (TDFV).

This sequence belongs to the EF-Ts family.

It is found in the cytoplasm. In terms of biological role, associates with the EF-Tu.GDP complex and induces the exchange of GDP to GTP. It remains bound to the aminoacyl-tRNA.EF-Tu.GTP complex up to the GTP hydrolysis stage on the ribosome. The chain is Elongation factor Ts from Psychrobacter arcticus (strain DSM 17307 / VKM B-2377 / 273-4).